A 259-amino-acid chain; its full sequence is MSYTPSEFRQQIRSRRLSGPTAGYCGDYAQANLAILPKQHADDFLRFCTLNPKACPLLGIGEPGDWRVPALGADLDIRNDVPAFYVYRHGERAEEVRSLDELWRDDLVVFAIGCSFSFEEMLRREGIALRHIEQQVNVPMYRTRERNVAAGVFGGNRVVSMRPMKAADAIRAIQITSRFPAVHGAPVHIGDPSLIGIRDLASPDFGDAVEVRSDELPVFWACGVTPQAAIESARLPFAIAHKPGHMLVTDIPNTTLAVL.

This sequence belongs to the D-glutamate cyclase family.

This chain is Putative hydro-lyase Bphyt_4813, found in Paraburkholderia phytofirmans (strain DSM 17436 / LMG 22146 / PsJN) (Burkholderia phytofirmans).